The chain runs to 204 residues: Large ribosomal subunit protein uL22c (204 aa).

This sequence belongs to the universal ribosomal protein uL22 family. Part of the 50S ribosomal subunit.

Its subcellular location is the plastid. The protein resides in the chloroplast. This protein binds specifically to 23S rRNA. Functionally, the globular domain of the protein is located near the polypeptide exit tunnel on the outside of the subunit, while an extended beta-hairpin is found that lines the wall of the exit tunnel in the center of the 70S ribosome. This is Large ribosomal subunit protein uL22c (rpl22) from Pisum sativum (Garden pea).